The sequence spans 97 residues: Large ribosomal subunit protein uL23 (97 aa).

The protein belongs to the universal ribosomal protein uL23 family. In terms of assembly, part of the 50S ribosomal subunit. Contacts protein L29, and trigger factor when it is bound to the ribosome.

Its function is as follows. One of the early assembly proteins it binds 23S rRNA. One of the proteins that surrounds the polypeptide exit tunnel on the outside of the ribosome. Forms the main docking site for trigger factor binding to the ribosome. The protein is Large ribosomal subunit protein uL23 of Lactiplantibacillus plantarum (strain ATCC BAA-793 / NCIMB 8826 / WCFS1) (Lactobacillus plantarum).